A 193-amino-acid polypeptide reads, in one-letter code: uncharacterized protein (193 aa).

Arginine 8 serves as a coordination point for substrate. The active-site Tele-phosphohistidine intermediate is the histidine 9. Positions 15, 21, and 58 each coordinate substrate. The active-site Proton donor/acceptor is the glutamate 82. Histidine 139 contributes to the substrate binding site.

Belongs to the phosphoglycerate mutase family. GpmB subfamily.

Its function is as follows. Phosphatase with broad substrate specificity. Does not have phosphoglycerate mutase activity. This is an uncharacterized protein from Bacillus subtilis (strain 168).